A 160-amino-acid polypeptide reads, in one-letter code: Protein TCP17 (160 aa).

The protein resides in the cytoplasm. The chain is Protein TCP17 from Trypanosoma cruzi.